Consider the following 184-residue polypeptide: ATP synthase subunit b, chloroplastic (184 aa).

The helical transmembrane segment at 27–49 (LATNLINLSVVLGVLIFFGKGVL) threads the bilayer.

This sequence belongs to the ATPase B chain family. As to quaternary structure, F-type ATPases have 2 components, F(1) - the catalytic core - and F(0) - the membrane proton channel. F(1) has five subunits: alpha(3), beta(3), gamma(1), delta(1), epsilon(1). F(0) has four main subunits: a(1), b(1), b'(1) and c(10-14). The alpha and beta chains form an alternating ring which encloses part of the gamma chain. F(1) is attached to F(0) by a central stalk formed by the gamma and epsilon chains, while a peripheral stalk is formed by the delta, b and b' chains.

It localises to the plastid. The protein resides in the chloroplast thylakoid membrane. In terms of biological role, f(1)F(0) ATP synthase produces ATP from ADP in the presence of a proton or sodium gradient. F-type ATPases consist of two structural domains, F(1) containing the extramembraneous catalytic core and F(0) containing the membrane proton channel, linked together by a central stalk and a peripheral stalk. During catalysis, ATP synthesis in the catalytic domain of F(1) is coupled via a rotary mechanism of the central stalk subunits to proton translocation. Functionally, component of the F(0) channel, it forms part of the peripheral stalk, linking F(1) to F(0). This Spinacia oleracea (Spinach) protein is ATP synthase subunit b, chloroplastic.